The sequence spans 333 residues: CRISPR-associated endonuclease Cas1 (333 aa).

Mn(2+) contacts are provided by Glu162, His226, and Glu241.

Belongs to the CRISPR-associated endonuclease Cas1 family. In terms of assembly, homodimer, forms a heterotetramer with a Cas2 homodimer. Mg(2+) serves as cofactor. It depends on Mn(2+) as a cofactor.

CRISPR (clustered regularly interspaced short palindromic repeat), is an adaptive immune system that provides protection against mobile genetic elements (viruses, transposable elements and conjugative plasmids). CRISPR clusters contain spacers, sequences complementary to antecedent mobile elements, and target invading nucleic acids. CRISPR clusters are transcribed and processed into CRISPR RNA (crRNA). Acts as a dsDNA endonuclease. Involved in the integration of spacer DNA into the CRISPR cassette. This is CRISPR-associated endonuclease Cas1 from Nanoarchaeum equitans (strain Kin4-M).